We begin with the raw amino-acid sequence, 283 residues long: Elongation factor Ts (283 aa).

Positions 84–87 are involved in Mg(2+) ion dislocation from EF-Tu; it reads TDFV.

It belongs to the EF-Ts family.

Its subcellular location is the cytoplasm. Associates with the EF-Tu.GDP complex and induces the exchange of GDP to GTP. It remains bound to the aminoacyl-tRNA.EF-Tu.GTP complex up to the GTP hydrolysis stage on the ribosome. This chain is Elongation factor Ts, found in Bifidobacterium longum (strain DJO10A).